The primary structure comprises 815 residues: DNA replication licensing factor Mcm6 (815 aa).

Residues 152–179 (CLDCQTEIRNVEQQFKFTNPTICRNPVC) form a C4-type zinc finger. The MCM domain maps to 338–544 (LYQNLITCLF…VVDYAIARKI (207 aa)). The ATP site is built by Ser391, Thr392, Ala393, Lys394, Ser395, and Asn496. Positions 520–523 (SRFD) match the Arginine finger motif. Arg611 and Glu614 together coordinate ADP. The tract at residues 672–693 (DDIDMENNGSAANTETDTLDTS) is disordered. The span at 678 to 693 (NNGSAANTETDTLDTS) shows a compositional bias: polar residues.

Belongs to the MCM family. In terms of assembly, component of the Mcm2-7 complex. The complex forms a toroidal hexameric ring with the proposed subunit order Mcm2-Mcm6-Mcm4-Mcm7-Mcm3-Mcm5. The heterodimers of mcm4/mcm6 and mcm3/mcm5 interact with mcm2 and mcm7.

The protein resides in the nucleus. It catalyses the reaction ATP + H2O = ADP + phosphate + H(+). Its function is as follows. Acts as a component of the Mcm2-7 complex (Mcm complex) which is the putative replicative helicase essential for 'once per cell cycle' DNA replication initiation and elongation in eukaryotic cells. Core component of CDC45-MCM-GINS (CMG) helicase, the molecular machine that unwinds template DNA during replication, and around which the replisome is built. The active ATPase sites in the Mcm2-7 ring are formed through the interaction surfaces of two neighboring subunits such that a critical structure of a conserved arginine finger motif is provided in trans relative to the ATP-binding site of the Walker A box of the adjacent subunit. The six ATPase active sites, however, are likely to contribute differentially to the complex helicase activity Required for DNA replication and cell proliferation. Required for mitotic cycles, endocycles, and the special S phase associated with the amplification of chorion genes; has a role in origin unwinding or fork elongation at chorion loci. Functionally, acts as a component of the MCM2-7 complex (MCM complex) which is the replicative helicase essential for 'once per cell cycle' DNA replication initiation and elongation in eukaryotic cells. Core component of CDC45-MCM-GINS (CMG) helicase, the molecular machine that unwinds template DNA during replication, and around which the replisome is built. The active ATPase sites in the MCM2-7 ring are formed through the interaction surfaces of two neighboring subunits such that a critical structure of a conserved arginine finger motif is provided in trans relative to the ATP-binding site of the Walker A box of the adjacent subunit. The six ATPase active sites, however, are likely to contribute differentially to the complex helicase activity. The chain is DNA replication licensing factor Mcm6 (Mcm6) from Drosophila pseudoobscura pseudoobscura (Fruit fly).